The primary structure comprises 92 residues: Putative septation protein SpoVG (92 aa).

It belongs to the SpoVG family.

In terms of biological role, could be involved in septation. The chain is Putative septation protein SpoVG from Clostridium botulinum (strain Eklund 17B / Type B).